A 431-amino-acid chain; its full sequence is Tol-Pal system protein TolB (431 aa).

An N-terminal signal peptide occupies residues 1 to 26 (MSLMTKLGFRALVASCLITAGSAANA). Positions 406 to 431 (DGSAPPQILSVQGGSVREPSWGPFMQ) are disordered.

Belongs to the TolB family. As to quaternary structure, the Tol-Pal system is composed of five core proteins: the inner membrane proteins TolA, TolQ and TolR, the periplasmic protein TolB and the outer membrane protein Pal. They form a network linking the inner and outer membranes and the peptidoglycan layer.

The protein localises to the periplasm. In terms of biological role, part of the Tol-Pal system, which plays a role in outer membrane invagination during cell division and is important for maintaining outer membrane integrity. In Burkholderia orbicola (strain AU 1054), this protein is Tol-Pal system protein TolB.